Reading from the N-terminus, the 746-residue chain is Hyperosmolality-gated Ca2+ permeable channel 2.1 (746 aa).

10 helical membrane-spanning segments follow: residues 3–23 (ISAL…LLSL), 90–110 (MVIF…AFVL), 144–164 (LWVH…LLYF), 357–377 (IATL…VTFI), 405–425 (VITG…VPPL), 445–465 (ACIK…ILSG), 492–512 (AGFF…CEIM), 560–580 (VIAP…YLIY), 601–621 (IFHN…LGFF), and 623–643 (LKLS…TLLF). Polar residues predominate over residues 692 to 702 (LHSQKSSSKAE). Residues 692–723 (LHSQKSSSKAECSNPFKKQELPDPEKLKPEEG) are disordered. Over residues 708–723 (KKQELPDPEKLKPEEG) the composition is skewed to basic and acidic residues.

The protein belongs to the CSC1 (TC 1.A.17) family.

It localises to the membrane. Its function is as follows. Acts as an osmosensitive calcium-permeable cation channel. This is Hyperosmolality-gated Ca2+ permeable channel 2.1 from Arabidopsis thaliana (Mouse-ear cress).